Reading from the N-terminus, the 77-residue chain is Conotoxin Vc6.14 (77 aa).

The N-terminal stretch at 1 to 19 (MEKLTILLLVAAVLMSTQA) is a signal peptide. Positions 20–37 (MFQGGGEKRPKDKIKFLS) are excised as a propeptide. 3 cysteine pairs are disulfide-bonded: C51–C65, C58–C69, and C64–C74.

This sequence belongs to the conotoxin O2 superfamily. As to expression, expressed by the venom duct.

The protein localises to the secreted. Inhibits voltage-gated ion channels. This Conus victoriae (Queen Victoria cone) protein is Conotoxin Vc6.14.